The chain runs to 295 residues: Trimeric intracellular cation channel type A (295 aa).

At methionine 1–lysine 18 the chain is on the lumenal side. Residues methionine 19–leucine 37 traverse the membrane as a helical segment. At lysine 38 to proline 51 the chain is on the cytoplasmic side. A helical transmembrane segment spans residues valine 52–valine 75. Glycine 74 is a Ca(2+) binding site. The Lumenal segment spans residues cysteine 76 to histidine 86. Residues isoleucine 87 to tyrosine 106 traverse the membrane as a helical segment. Topologically, residues lysine 107–glycine 144 are cytoplasmic. A 1,2-diacyl-sn-glycero-3-phospho-(1D-myo-inositol-4,5-bisphosphate) is bound by residues lysine 122 and arginine 126. Residues tryptophan 145–methionine 162 form a helical membrane-spanning segment. Residues serine 163 to asparagine 182 are Lumenal-facing. The helical transmembrane segment at methionine 183–leucine 199 threads the bilayer. Residues glutamine 200 to serine 210 lie on the Cytoplasmic side of the membrane. A helical membrane pass occupies residues threonine 211–methionine 227. The Lumenal portion of the chain corresponds to threonine 228–proline 236. The helical transmembrane segment at phenylalanine 237–threonine 255 threads the bilayer. The Cytoplasmic portion of the chain corresponds to glutamate 256 to glutamate 295. Positions histidine 259–glutamate 295 are disordered. The span at alanine 265–alanine 276 shows a compositional bias: low complexity. Residues lysine 277–threonine 286 are compositionally biased toward basic and acidic residues.

Belongs to the TMEM38 family. Homotrimer; conformation seems to be controled by binding to diacylglycerol (DAG).

The protein localises to the sarcoplasmic reticulum membrane. It localises to the nucleus membrane. It catalyses the reaction K(+)(in) = K(+)(out). Channel activity is activated by a change of voltage within the sarcoplasmic reticulum lumen and blocked by luminal high Ca(2+) levels. Intracellular monovalent cation channel required for maintenance of rapid intracellular calcium release. Acts as a potassium counter-ion channel that functions in synchronization with calcium release from intracellular stores. Opened by a change of voltage within the sarcoplasmic reticulum lumen. This chain is Trimeric intracellular cation channel type A (tmem38a), found in Danio rerio (Zebrafish).